The chain runs to 69 residues: DNA gyrase inhibitor YacG (69 aa).

Positions 1–15 (MSDEPEHTAKVEPLR) are enriched in basic and acidic residues. The interval 1-22 (MSDEPEHTAKVEPLRKPLPCPE) is disordered. 4 residues coordinate Zn(2+): cysteine 20, cysteine 23, cysteine 35, and cysteine 39.

Belongs to the DNA gyrase inhibitor YacG family. Interacts with GyrB. Requires Zn(2+) as cofactor.

Inhibits all the catalytic activities of DNA gyrase by preventing its interaction with DNA. Acts by binding directly to the C-terminal domain of GyrB, which probably disrupts DNA binding by the gyrase. In Allorhizobium ampelinum (strain ATCC BAA-846 / DSM 112012 / S4) (Agrobacterium vitis (strain S4)), this protein is DNA gyrase inhibitor YacG.